A 153-amino-acid chain; its full sequence is Large ribosomal subunit protein uL15 (153 aa).

The tract at residues 1–49 is disordered; sequence MQLHNLYPFPEERKTRRRVGRGSGSGLGCTAGKGHKGQNARAGGGVAPG. Over residues 21–31 the composition is skewed to gly residues; sequence RGSGSGLGCTA.

This sequence belongs to the universal ribosomal protein uL15 family. In terms of assembly, part of the 50S ribosomal subunit.

Binds to the 23S rRNA. The polypeptide is Large ribosomal subunit protein uL15 (Desulfovibrio desulfuricans (strain ATCC 27774 / DSM 6949 / MB)).